The sequence spans 756 residues: Xylosyl- and glucuronyltransferase LARGE1 (756 aa).

Over 1-10 (MLGICRGRRK) the chain is Cytoplasmic. Residues 11–31 (FLAASLTLLCIPAITWIYLFA) traverse the membrane as a helical; Signal-anchor for type II membrane protein segment. The Lumenal portion of the chain corresponds to 32-756 (GSFEDGKPVS…LKYLTAENNS (725 aa)). Disordered stretches follow at residues 43–64 (SPLE…ERES) and 82–108 (QLSL…EEGT). Positions 44-58 (PLESQAHSPRYTASS) are enriched in polar residues. Residues 53-95 (RYTASSQRERESLEVRVREVEEENRALRRQLSLAQGQSPAHHR) are a coiled coil. N-linked (GlcNAc...) asparagine glycans are attached at residues N97, N122, and N148. The tract at residues 138 to 413 (IHVAIVCAGY…FLEYDGNLLR (276 aa)) is xylosyltransferase activity. Residues D242 and D244 each contribute to the Mn(2+) site. Residue N272 is glycosylated (N-linked (GlcNAc...) asparagine). Residues 414–756 (RELFGCPSET…LKYLTAENNS (343 aa)) form a glucuronyltransferase activity region. Mn(2+)-binding residues include D563 and D565.

It in the C-terminal section; belongs to the glycosyltransferase 49 family. This sequence in the N-terminal section; belongs to the glycosyltransferase 8 family. In terms of assembly, interacts with DAG1 (via the N-terminal domain of alpha-DAG1); the interaction increases binding of DAG1 to laminin. Interacts with B4GAT1. It depends on Mn(2+) as a cofactor. Ubiquitous. Highest expression in heart, diaphragm and brain, where it is especially found in cerebral cortex, hippocampus, and trigeminal ganglion.

It is found in the golgi apparatus membrane. The enzyme catalyses 3-O-[beta-D-GlcA-(1-&gt;3)-beta-D-Xyl-(1-&gt;4)-Rib-ol-P-Rib-ol-P-3-beta-D-GalNAc-(1-&gt;3)-beta-D-GlcNAc-(1-&gt;4)-(O-6-P-alpha-D-Man)]-Thr-[protein] + UDP-alpha-D-xylose = 3-O-[alpha-D-Xyl-(1-&gt;3)-beta-D-GlcA-(1-&gt;4)-beta-D-Xyl-(1-&gt;4)-Rib-ol-P-Rib-ol-P-3-beta-D-GalNAc-(1-&gt;3)-beta-D-GlcNAc-(1-&gt;4)-(O-6-P-alpha-D-Man)]-Thr-[protein] + UDP + H(+). The catalysed reaction is 3-O-{(1-&gt;[3)-alpha-D-Xyl-(1-&gt;3)-beta-D-GlcA-(1-&gt;](n)-4)-beta-D-Xyl-(1-&gt;4)-Rib-ol-P-Rib-ol-P-3-beta-D-GalNAc-(1-&gt;3)-beta-D-GlcNAc-(1-&gt;4)-O-6-P-alpha-D-Man}-L-Thr-[protein] + UDP-alpha-D-glucuronate = 3-O-{beta-D-GlcA-(1-&gt;[3)-alpha-D-Xyl-(1-&gt;3)-beta-D-GlcA-(1-&gt;](n)-4)-beta-D-Xyl-(1-&gt;4)-Rib-ol-P-Rib-ol-P-3-beta-D-GalNAc-(1-&gt;3)-beta-D-GlcNAc-(1-&gt;4)-O-6-P-alpha-D-Man}-L-Thr-[protein] + UDP + H(+). It carries out the reaction 3-O-{beta-D-GlcA-(1-&gt;[3)-alpha-D-Xyl-(1-&gt;3)-beta-D-GlcA-(1-&gt;](n)-4)-beta-D-Xyl-(1-&gt;4)-Rib-ol-P-Rib-ol-P-3-beta-D-GalNAc-(1-&gt;3)-beta-D-GlcNAc-(1-&gt;4)-O-6-P-alpha-D-Man}-L-Thr-[protein] + UDP-alpha-D-xylose = 3-O-{(1-&gt;[3)-alpha-D-Xyl-(1-&gt;3)-beta-D-GlcA-(1-&gt;](n+1)-4)-beta-D-Xyl-(1-&gt;4)-Rib-ol-P-Rib-ol-P-3-beta-D-GalNAc-(1-&gt;3)-beta-D-GlcNAc-(1-&gt;4)-O-6-P-alpha-D-Man}-L-Thr-[protein] + UDP + H(+). The protein operates within protein modification; protein glycosylation. Bifunctional glycosyltransferase with both alpha-1,3-xylosyltransferase and beta-1,3-glucuronyltransferase activities involved in the maturation of alpha-dystroglycan (DAG1) by glycosylation leading to DAG1 binding to laminin G-like domain-containing extracellular proteins with high affinity. Elongates the glucuronyl-beta-1,4-xylose-beta disaccharide primer structure initiated by B4GAT1 by adding repeating units [-3-Xylose-alpha-1,3-GlcA-beta-1-] to produce a heteropolysaccharide. Requires the phosphorylation of core M3 (O-mannosyl trisaccharide) by POMK to elongate the glucuronyl-beta-1,4-xylose-beta disaccharide primer. Plays a key role in skeletal muscle function and regeneration. This chain is Xylosyl- and glucuronyltransferase LARGE1, found in Mus musculus (Mouse).